Consider the following 269-residue polypeptide: 4-hydroxy-tetrahydrodipicolinate reductase (269 aa).

Residues 10–15 (GANGRM), Glu-36, 99–101 (GTT), and 123–126 (AANF) each bind NAD(+). Catalysis depends on His-156, which acts as the Proton donor/acceptor. Position 157 (His-157) interacts with (S)-2,3,4,5-tetrahydrodipicolinate. The Proton donor role is filled by Lys-160. (S)-2,3,4,5-tetrahydrodipicolinate is bound at residue 166-167 (GT).

This sequence belongs to the DapB family.

The protein localises to the cytoplasm. It carries out the reaction (S)-2,3,4,5-tetrahydrodipicolinate + NAD(+) + H2O = (2S,4S)-4-hydroxy-2,3,4,5-tetrahydrodipicolinate + NADH + H(+). It catalyses the reaction (S)-2,3,4,5-tetrahydrodipicolinate + NADP(+) + H2O = (2S,4S)-4-hydroxy-2,3,4,5-tetrahydrodipicolinate + NADPH + H(+). It participates in amino-acid biosynthesis; L-lysine biosynthesis via DAP pathway; (S)-tetrahydrodipicolinate from L-aspartate: step 4/4. Functionally, catalyzes the conversion of 4-hydroxy-tetrahydrodipicolinate (HTPA) to tetrahydrodipicolinate. The polypeptide is 4-hydroxy-tetrahydrodipicolinate reductase (Neisseria meningitidis serogroup C (strain 053442)).